Here is a 311-residue protein sequence, read N- to C-terminus: Ornithine carbamoyltransferase (311 aa).

Carbamoyl phosphate contacts are provided by residues 52 to 55, glutamine 79, arginine 103, and 129 to 132; these read STRT and HPVQ. Residues asparagine 167, aspartate 226, and 230–231 each bind L-ornithine; that span reads SM. Carbamoyl phosphate is bound by residues 266–267 and arginine 294; that span reads CL.

It belongs to the aspartate/ornithine carbamoyltransferase superfamily. OTCase family.

Its subcellular location is the cytoplasm. It carries out the reaction carbamoyl phosphate + L-ornithine = L-citrulline + phosphate + H(+). It participates in amino-acid biosynthesis; L-arginine biosynthesis; L-arginine from L-ornithine and carbamoyl phosphate: step 1/3. Functionally, reversibly catalyzes the transfer of the carbamoyl group from carbamoyl phosphate (CP) to the N(epsilon) atom of ornithine (ORN) to produce L-citrulline. The sequence is that of Ornithine carbamoyltransferase from Sorangium cellulosum (strain So ce56) (Polyangium cellulosum (strain So ce56)).